A 761-amino-acid chain; its full sequence is RNA-binding protein 12B (761 aa).

Residues S98, S101, and S112 each carry the phosphoserine modification. Residue K114 forms a Glycyl lysine isopeptide (Lys-Gly) (interchain with G-Cter in SUMO2) linkage. Positions 120 to 147 (SGYGSSINQDAGFHSNGTGHGNLRPRKT) are disordered. Residue K151 forms a Glycyl lysine isopeptide (Lys-Gly) (interchain with G-Cter in SUMO2) linkage. Residues 155 to 230 (PYLFLRGLPY…RFIEVMQGSE (76 aa)) form the RRM 1 domain. Residues 247–262 (LRRSEEHSPPRGINDR) show a composition bias toward basic and acidic residues. A disordered region spans residues 247–278 (LRRSEEHSPPRGINDRHFRKRSHSKSPRRTRS). Phosphoserine is present on residues S250 and S254. A compositionally biased stretch (basic residues) spans 263–278 (HFRKRSHSKSPRRTRS). T276 bears the Phosphothreonine mark. A phosphoserine mark is found at S278, S280, S292, and S294. Residues 284–360 (FYVHLKNLSL…RPVHIDPISR (77 aa)) form the RRM 2 domain. K319 carries the post-translational modification N6-acetyllysine. K335 is covalently cross-linked (Glycyl lysine isopeptide (Lys-Gly) (interchain with G-Cter in SUMO2)). Residues 372–384 (KKRSGSPERDRPG) are compositionally biased toward basic and acidic residues. The disordered stretch occupies residues 372-392 (KKRSGSPERDRPGHVSQKYSQ). A Phosphoserine modification is found at S377. Positions 400–477 (LCIYIRNFPF…TEVLLRLISE (78 aa)) constitute an RRM 3 domain. Residues K514 and K541 each participate in a glycyl lysine isopeptide (Lys-Gly) (interchain with G-Cter in SUMO2) cross-link. Over residues 538-621 (DNFKHPQRDF…RHPREEDWRR (84 aa)) the composition is skewed to basic and acidic residues. The interval 538–690 (DNFKHPQRDF…THQMKTSGAL (153 aa)) is disordered. S575 and S591 each carry phosphoserine. The segment covering 627–654 (LQSTSGGHPQSISGGHPQSISGARPRST) has biased composition (polar residues). The segment covering 661–672 (SISGGRLRSISG) has biased composition (low complexity).

The protein is RNA-binding protein 12B (RBM12B) of Pongo abelii (Sumatran orangutan).